The sequence spans 707 residues: Kinesin-like protein KIN-13B (707 aa).

The 326-residue stretch at 152 to 477 (KIKVVVRKRP…LRYADRVKSL (326 aa)) folds into the Kinesin motor domain. 243–250 (GQTGSGKT) serves as a coordination point for ATP. Residues 619–656 (EHLNELLQEEEDLVSAHRKQVEETLDMIKEEMNLLVEA) are a coiled coil.

The protein belongs to the TRAFAC class myosin-kinesin ATPase superfamily. Kinesin family. KIN-13 subfamily.

The protein is Kinesin-like protein KIN-13B of Oryza sativa subsp. japonica (Rice).